Reading from the N-terminus, the 99-residue chain is Aspartyl/glutamyl-tRNA(Asn/Gln) amidotransferase subunit C (99 aa).

The protein belongs to the GatC family. In terms of assembly, heterotrimer of A, B and C subunits.

It carries out the reaction L-glutamyl-tRNA(Gln) + L-glutamine + ATP + H2O = L-glutaminyl-tRNA(Gln) + L-glutamate + ADP + phosphate + H(+). The enzyme catalyses L-aspartyl-tRNA(Asn) + L-glutamine + ATP + H2O = L-asparaginyl-tRNA(Asn) + L-glutamate + ADP + phosphate + 2 H(+). In terms of biological role, allows the formation of correctly charged Asn-tRNA(Asn) or Gln-tRNA(Gln) through the transamidation of misacylated Asp-tRNA(Asn) or Glu-tRNA(Gln) in organisms which lack either or both of asparaginyl-tRNA or glutaminyl-tRNA synthetases. The reaction takes place in the presence of glutamine and ATP through an activated phospho-Asp-tRNA(Asn) or phospho-Glu-tRNA(Gln). This chain is Aspartyl/glutamyl-tRNA(Asn/Gln) amidotransferase subunit C, found in Variovorax paradoxus (strain S110).